Here is a 39-residue protein sequence, read N- to C-terminus: Cytochrome b559 subunit beta (39 aa).

A helical transmembrane segment spans residues 14–30; it reads WLAVHGLAVPTVSFLGS. His-18 is a binding site for heme.

Belongs to the PsbE/PsbF family. In terms of assembly, heterodimer of an alpha subunit and a beta subunit. PSII is composed of 1 copy each of membrane proteins PsbA, PsbB, PsbC, PsbD, PsbE, PsbF, PsbH, PsbI, PsbJ, PsbK, PsbL, PsbM, PsbT, PsbX, PsbY, PsbZ, Psb30/Ycf12, at least 3 peripheral proteins of the oxygen-evolving complex and a large number of cofactors. It forms dimeric complexes. Requires heme b as cofactor.

It localises to the plastid. The protein resides in the chloroplast thylakoid membrane. In terms of biological role, this b-type cytochrome is tightly associated with the reaction center of photosystem II (PSII). PSII is a light-driven water:plastoquinone oxidoreductase that uses light energy to abstract electrons from H(2)O, generating O(2) and a proton gradient subsequently used for ATP formation. It consists of a core antenna complex that captures photons, and an electron transfer chain that converts photonic excitation into a charge separation. This chain is Cytochrome b559 subunit beta, found in Muilla maritima (Sea muilla).